The following is a 148-amino-acid chain: Macrodomain Ter protein (148 aa).

Belongs to the MatP family. Homodimer.

It is found in the cytoplasm. Functionally, required for spatial organization of the terminus region of the chromosome (Ter macrodomain) during the cell cycle. Prevents early segregation of duplicated Ter macrodomains during cell division. Binds specifically to matS, which is a 13 bp signature motif repeated within the Ter macrodomain. This Haemophilus influenzae (strain 86-028NP) protein is Macrodomain Ter protein.